Reading from the N-terminus, the 598-residue chain is Probable ATP-dependent RNA helicase DDX52 (598 aa).

Position 15 is an N6-acetyllysine (lysine 15). A Phosphoserine modification is found at serine 39. Residues 59–98 (CGGLQTQQELQNEETTEGGLLERSKEPKKKKRKKMTADVP) are disordered. The Q motif motif lies at 166 to 194 (QLDQEYKISPRLLQNILDAGFQVPTPIQM). The Helicase ATP-binding domain occupies 197–375 (IPVMLHGREL…KLNLDNIVSV (179 aa)). 210–217 (APTGSGKT) provides a ligand contact to ATP. The DEAD box signature appears at 319-322 (DESD). Residues 386-547 (TVEQELLFVG…PVPEYIKGFQ (162 aa)) form the Helicase C-terminal domain. The segment at 578 to 598 (AKQKKVAGQNSKKKETLKGKS) is disordered. A compositionally biased stretch (basic and acidic residues) spans 589–598 (KKKETLKGKS).

It belongs to the DEAD box helicase family. DDX52/ROK1 subfamily.

It localises to the nucleus. The protein resides in the nucleolus. It catalyses the reaction ATP + H2O = ADP + phosphate + H(+). Required for efficient ribosome biogenesis. May control cell cycle progression by regulating translation of mRNAs that contain a terminal oligo pyrimidine (TOP) motif in their 5' UTRs, such as GTPBP4. This is Probable ATP-dependent RNA helicase DDX52 (Ddx52) from Rattus norvegicus (Rat).